A 242-amino-acid chain; its full sequence is Small ribosomal subunit protein uS7m (242 aa).

The transit peptide at 1–37 (MAAPALRAPLRWSGLALGVRCAVWNLPGLTQVRGSRY) directs the protein to the mitochondrion. Position 228 is an N6-acetyllysine (K228).

Belongs to the universal ribosomal protein uS7 family. Component of the mitochondrial ribosome small subunit (28S) which comprises a 12S rRNA and about 30 distinct proteins.

It is found in the mitochondrion. The sequence is that of Small ribosomal subunit protein uS7m (Mrps7) from Mus musculus (Mouse).